A 156-amino-acid chain; its full sequence is Cyclin-dependent protein kinase inhibitor SMR10 (156 aa).

Residues 52–90 (QDQDLEPKSQETNNCSRKEGATVKKEEEEEDDYCKTPTR) are disordered. Positions 67–77 (SRKEGATVKKE) are enriched in basic and acidic residues.

Its function is as follows. Probable cyclin-dependent protein kinase (CDK) inhibitor that functions as a repressor of mitosis in the endoreduplication cell cycle. The protein is Cyclin-dependent protein kinase inhibitor SMR10 of Arabidopsis thaliana (Mouse-ear cress).